Reading from the N-terminus, the 463-residue chain is ATP sulfurylase 1, chloroplastic (463 aa).

Residues 1-48 (MASMAAVLSKTPFLSQPLTKSSPNSDLPFAAVSFPSKSLRRRVGSIRA) constitute a chloroplast transit peptide.

This sequence belongs to the sulfate adenylyltransferase family. Homotetramer.

It is found in the plastid. Its subcellular location is the chloroplast stroma. It carries out the reaction sulfate + ATP + H(+) = adenosine 5'-phosphosulfate + diphosphate. The protein operates within sulfur metabolism; hydrogen sulfide biosynthesis; sulfite from sulfate: step 1/3. In terms of biological role, mediates selenate (Se) reduction, and promotes Se and sulfur (S) uptake and assimilation. The chain is ATP sulfurylase 1, chloroplastic (APS1) from Arabidopsis thaliana (Mouse-ear cress).